A 436-amino-acid chain; its full sequence is 3-ketoacyl-CoA thiolase (436 aa).

C99 acts as the Acyl-thioester intermediate in catalysis. Catalysis depends on proton acceptor residues H392 and C422.

The protein belongs to the thiolase-like superfamily. Thiolase family. Heterotetramer of two alpha chains (FadJ) and two beta chains (FadI).

Its subcellular location is the cytoplasm. It carries out the reaction an acyl-CoA + acetyl-CoA = a 3-oxoacyl-CoA + CoA. It participates in lipid metabolism; fatty acid beta-oxidation. Catalyzes the final step of fatty acid oxidation in which acetyl-CoA is released and the CoA ester of a fatty acid two carbons shorter is formed. The chain is 3-ketoacyl-CoA thiolase from Shigella boydii serotype 18 (strain CDC 3083-94 / BS512).